Here is a 202-residue protein sequence, read N- to C-terminus: Tetranectin (202 aa).

The N-terminal stretch at 1–21 (MELWGAYLLLCLFSLLTQVTT) is a signal peptide. An O-linked (GalNAc...) threonine glycan is attached at Thr-25. Intrachain disulfides connect Cys-71-Cys-81, Cys-98-Cys-197, and Cys-173-Cys-189. Residues 77–198 (VHMKCFLAFT…CRDQLPYICQ (122 aa)) form the C-type lectin domain.

As to quaternary structure, homotrimer. Found in plasma.

The protein resides in the secreted. In terms of biological role, tetranectin binds to plasminogen and to isolated kringle 4. May be involved in the packaging of molecules destined for exocytosis. Plays a role in retinal function. The protein is Tetranectin (CLEC3B) of Homo sapiens (Human).